A 401-amino-acid polypeptide reads, in one-letter code: Golgi membrane protein 1 (401 aa).

An N-acetylmethionine modification is found at Met-1. Residues 1-12 lie on the Cytoplasmic side of the membrane; that stretch reads MMGLGNGRRSMK. Residues 13-35 form a helical; Signal-anchor for type II membrane protein membrane-spanning segment; that stretch reads SPPLVLAALVACIIVLGFNYWIA. Residues 36–401 are Lumenal-facing; the sequence is SSRSVDLQTR…DQREKRNHTL (366 aa). Residues 40 to 205 adopt a coiled-coil conformation; the sequence is VDLQTRIMEL…QRQQLQALSE (166 aa). N-linked (GlcNAc...) (complex) asparagine glycosylation is present at Asn-109. Asn-144 carries N-linked (GlcNAc...) asparagine glycosylation. Positions 178 to 401 are disordered; that stretch reads TKKGNEAVAS…DQREKRNHTL (224 aa). A Phosphoserine modification is found at Ser-187. Positions 228 to 238 are enriched in polar residues; that stretch reads LGNSKSQTPAP. Basic and acidic residues-rich tracts occupy residues 244–255 and 264–285; these read LDSKRQVEKEET and EPQR…DRPV. Residues 286–295 show a composition bias toward gly residues; that stretch reads GGRGFGGAGE. Positions 298–312 are enriched in polar residues; sequence QTPQVQAALSVSQEN. Ser-309 is subject to Phosphoserine; by FAM20C. Over residues 350 to 360 the composition is skewed to acidic residues; it reads DYNMDENEAES. The span at 381–395 shows a compositional bias: basic and acidic residues; sequence EDQKRDTINLLDQRE. An N-linked (GlcNAc...) asparagine glycan is attached at Asn-398.

The protein belongs to the GOLM family. Interacts with DYM. Glycosylated. Post-translationally, phosphorylation sites are present in the extracellular medium. In terms of tissue distribution, widely expressed. Highly expressed in colon, prostate, trachea and stomach. Expressed at lower level in testis, muscle, lymphoid tissues, white blood cells and spleen. Predominantly expressed by cells of the epithelial lineage. Expressed at low level in normal liver. Expression significantly increases in virus (HBV, HCV) infected liver. Expression does not increase in liver disease due to non-viral causes (alcohol-induced liver disease, autoimmune hepatitis). Increased expression in hepatocytes appears to be a general feature of advanced liver disease. In liver tissue from patients with adult giant-cell hepatitis (GCH), it is strongly expressed in hepatocytes-derived syncytial giant cells. Constitutively expressed by biliary epithelial cells but not by hepatocytes.

The protein localises to the golgi apparatus. Its subcellular location is the cis-Golgi network membrane. Its function is as follows. Unknown. Cellular response protein to viral infection. The polypeptide is Golgi membrane protein 1 (GOLM1) (Homo sapiens (Human)).